Consider the following 123-residue polypeptide: Large ribosomal subunit protein uL14c (123 aa).

The protein belongs to the universal ribosomal protein uL14 family. As to quaternary structure, part of the 50S ribosomal subunit.

The protein resides in the plastid. It is found in the chloroplast. Functionally, binds to 23S rRNA. In Oryza nivara (Indian wild rice), this protein is Large ribosomal subunit protein uL14c.